A 265-amino-acid polypeptide reads, in one-letter code: 3-methyl-2-oxobutanoate hydroxymethyltransferase (265 aa).

2 residues coordinate Mg(2+): Asp-45 and Asp-84. 3-methyl-2-oxobutanoate is bound by residues 45 to 46, Asp-84, and Lys-112; that span reads DS. Residue Glu-114 participates in Mg(2+) binding. Glu-182 serves as the catalytic Proton acceptor.

Belongs to the PanB family. As to quaternary structure, homodecamer; pentamer of dimers. Mg(2+) serves as cofactor.

It localises to the cytoplasm. It catalyses the reaction 3-methyl-2-oxobutanoate + (6R)-5,10-methylene-5,6,7,8-tetrahydrofolate + H2O = 2-dehydropantoate + (6S)-5,6,7,8-tetrahydrofolate. Its pathway is cofactor biosynthesis; (R)-pantothenate biosynthesis; (R)-pantoate from 3-methyl-2-oxobutanoate: step 1/2. Its function is as follows. Catalyzes the reversible reaction in which hydroxymethyl group from 5,10-methylenetetrahydrofolate is transferred onto alpha-ketoisovalerate to form ketopantoate. This is 3-methyl-2-oxobutanoate hydroxymethyltransferase from Baumannia cicadellinicola subsp. Homalodisca coagulata.